The sequence spans 491 residues: Protein phosphatase ppm-1.G (491 aa).

A PPM-type phosphatase domain is found at serine 23–phenylalanine 486. Mn(2+)-binding residues include aspartate 57 and glycine 58. The segment covering lysine 112 to glycine 125 has biased composition (basic and acidic residues). 2 disordered regions span residues lysine 112 to isoleucine 136 and glycine 170 to valine 294. Composition is skewed to acidic residues over residues serine 173–threonine 192 and alanine 260–valine 294. The Mn(2+) site is built by aspartate 428 and aspartate 477.

The protein belongs to the PP2C family. Mg(2+) is required as a cofactor. Mn(2+) serves as cofactor.

The enzyme catalyses O-phospho-L-seryl-[protein] + H2O = L-seryl-[protein] + phosphate. It catalyses the reaction O-phospho-L-threonyl-[protein] + H2O = L-threonyl-[protein] + phosphate. In Caenorhabditis elegans, this protein is Protein phosphatase ppm-1.G.